Here is a 624-residue protein sequence, read N- to C-terminus: Glyco-Gag protein (624 aa).

Topologically, residues 1 to 63 are cytoplasmic; that stretch reads LGDVPGTSGA…FLPSVWNRSR (63 aa). The helical transmembrane segment at 64 to 86 threads the bilayer; it reads AARLVCCSIVLCCLCLAVFLYWS. Residues 87–624 are Extracellular-facing; that stretch reads ENMGQTVTTP…PQTSLLALDD (538 aa). An N-linked (GlcNAc...) asparagine; by host glycan is attached at Asn-113. Composition is skewed to pro residues over residues 200-209 and 247-258; these read PSLLPEPPLS and DPPPYRDPGPPP. Disordered regions lie at residues 200–284 and 290–309; these read PSLL…ASRL and LPVA…GGNG. N-linked (GlcNAc...) asparagine; by host glycosylation occurs at Asn-478. Composition is skewed to basic and acidic residues over residues 520 to 552 and 572 to 605; these read RETP…EKER and KQDR…DCPK. The interval 520 to 624 is disordered; that stretch reads RETPEEREER…PQTSLLALDD (105 aa).

In terms of processing, glycosylated by host. Post-translationally, cleaved by host near the middle of the molecule, releasing the c-terminal half containing capsid and nucleoprotein domains op GAG.

It is found in the host cell membrane. Plays a role in viral particle release. Presumably acts by facilitating the fission of the virion bud at the cell surface. May prevent the antiviral activity of murine APOBEC3. This Mus musculus (Mouse) protein is Glyco-Gag protein.